The following is a 23-amino-acid chain: MWTKPSFTDLRLGFEVTLYFANR.

The pyrroloquinoline quinone (Glu-Tyr) cross-link spans 15–19; that stretch reads EVTLY.

This sequence belongs to the PqqA family.

Its pathway is cofactor biosynthesis; pyrroloquinoline quinone biosynthesis. Required for coenzyme pyrroloquinoline quinone (PQQ) biosynthesis. PQQ is probably formed by cross-linking a specific glutamate to a specific tyrosine residue and excising these residues from the peptide. The protein is Coenzyme PQQ synthesis protein A of Pseudomonas aeruginosa (strain UCBPP-PA14).